Consider the following 443-residue polypeptide: Ribosomal protein uS12 methylthiotransferase RimO (443 aa).

The 112-residue stretch at 5–116 (PSVAVAHLGC…IVDVIQRAEA (112 aa)) folds into the MTTase N-terminal domain. Positions 14, 50, 79, 154, 158, and 161 each coordinate [4Fe-4S] cluster. One can recognise a Radical SAM core domain in the interval 140-370 (TTTEGTAYVR…ALQQPISWQQ (231 aa)). The region spanning 372–442 (QQEVGKTVQV…AYDLQGQLVS (71 aa)) is the TRAM domain.

The protein belongs to the methylthiotransferase family. RimO subfamily. It depends on [4Fe-4S] cluster as a cofactor.

Its subcellular location is the cytoplasm. The catalysed reaction is L-aspartate(89)-[ribosomal protein uS12]-hydrogen + (sulfur carrier)-SH + AH2 + 2 S-adenosyl-L-methionine = 3-methylsulfanyl-L-aspartate(89)-[ribosomal protein uS12]-hydrogen + (sulfur carrier)-H + 5'-deoxyadenosine + L-methionine + A + S-adenosyl-L-homocysteine + 2 H(+). Functionally, catalyzes the methylthiolation of an aspartic acid residue of ribosomal protein uS12. In Acaryochloris marina (strain MBIC 11017), this protein is Ribosomal protein uS12 methylthiotransferase RimO.